The chain runs to 257 residues: Imidazole glycerol phosphate synthase subunit HisF (257 aa).

Catalysis depends on residues D11 and D130.

Belongs to the HisA/HisF family. In terms of assembly, heterodimer of HisH and HisF.

It localises to the cytoplasm. The enzyme catalyses 5-[(5-phospho-1-deoxy-D-ribulos-1-ylimino)methylamino]-1-(5-phospho-beta-D-ribosyl)imidazole-4-carboxamide + L-glutamine = D-erythro-1-(imidazol-4-yl)glycerol 3-phosphate + 5-amino-1-(5-phospho-beta-D-ribosyl)imidazole-4-carboxamide + L-glutamate + H(+). The protein operates within amino-acid biosynthesis; L-histidine biosynthesis; L-histidine from 5-phospho-alpha-D-ribose 1-diphosphate: step 5/9. Functionally, IGPS catalyzes the conversion of PRFAR and glutamine to IGP, AICAR and glutamate. The HisF subunit catalyzes the cyclization activity that produces IGP and AICAR from PRFAR using the ammonia provided by the HisH subunit. The protein is Imidazole glycerol phosphate synthase subunit HisF of Pseudoalteromonas translucida (strain TAC 125).